A 175-amino-acid polypeptide reads, in one-letter code: DDB1- and CUL4-associated factor 16 (175 aa).

Residues 1-42 are disordered; it reads MGPRNPSPDPLSESESEEEENTNYLNESSGEEWDSSEEEDPV. Composition is skewed to acidic residues over residues 12-21 and 29-41; these read SESESEEEEN and SGEE…EEDP. At K61 the chain carries N6-acetyllysine.

In terms of assembly, interacts with DDB1 and CUL4A.

It is found in the nucleus. It functions in the pathway protein modification; protein ubiquitination. Functionally, functions as a substrate recognition component for CUL4-DDB1 E3 ubiquitin-protein ligase complex, which mediates ubiquitination and proteasome-dependent degradation of nuclear proteins. This is DDB1- and CUL4-associated factor 16 (DCAF16) from Bos taurus (Bovine).